We begin with the raw amino-acid sequence, 341 residues long: MPRYGYTTGTCATAATRAAIIALATGRKLKSVEVKLPSKKNAIININDVEIKEDYAMASVVKDGGDDPDVTTGLVIYSKVSFTDSGIYVDGGEGIGRVTKEGLPVKPGNAAINPVPMRMIKNTAMETLSELNISSGLKIIISAPGGDKVALKTCNPKLGIIGGISILGTTGIVVPYSAASWRASIVLAMRVAIKSNYDTVILTTGSRTEEYARKLFNDRYPCIDVGDFIGFSIRRAAENGIKNIIIACMPGKASKLAMGMEDTSSRNSGVDFDFIYKMALSINIKNAEIIKNSNTVNALVDEFTDDGLFKLMAELAKINLRRISNINIDVIIFDMSGNVIS.

The protein belongs to the CbiD family.

The enzyme catalyses Co-precorrin-5B + S-adenosyl-L-methionine = Co-precorrin-6A + S-adenosyl-L-homocysteine. It participates in cofactor biosynthesis; adenosylcobalamin biosynthesis; cob(II)yrinate a,c-diamide from sirohydrochlorin (anaerobic route): step 6/10. Catalyzes the methylation of C-1 in cobalt-precorrin-5B to form cobalt-precorrin-6A. The protein is Cobalt-precorrin-5B C(1)-methyltransferase of Picrophilus torridus (strain ATCC 700027 / DSM 9790 / JCM 10055 / NBRC 100828 / KAW 2/3).